A 258-amino-acid polypeptide reads, in one-letter code: Synaptosomal-associated protein 29 (258 aa).

The disordered stretch occupies residues 1 to 41 (MSAYPKSYNPFDDDGEDEGARPAPWRDARDLPDGPDAPADR). Residues 18 to 32 (EGARPAPWRDARDLP) are compositionally biased toward basic and acidic residues. Residues 76–107 (ASSEELARQRGVLERTEKMVDKMDQDLKISQK) adopt a coiled-coil conformation. Ser-77, Ser-78, and Ser-114 each carry phosphoserine. Phosphothreonine is present on residues Thr-130 and Thr-137. Residues 150 to 191 (ISTSKEQEAKYQASHPNLRKLDDTDPVPRGAGSAMSTDAYPK) form a disordered region. A phosphoserine mark is found at Ser-163, Ser-182, Ser-185, Ser-204, and Ser-210. One can recognise a t-SNARE coiled-coil homology domain in the interval 196 to 258 (RAYHQKIDSN…KSTERKVRQL (63 aa)).

This sequence belongs to the SNAP-25 family. In terms of assembly, forms a SNARE complex, composed of VAMP8, SNAP29 and STX17, involved in fusion of autophagosome with lysosome. Interacts with multiple syntaxins including STX6. Interacts with EIPR1. Interacts with STX17; this interaction is increased in the absence of TMEM39A. As to quaternary structure, (Microbial infection) Interacts with Hantaan hantavirus nucleoprotein; this interaction prevents the breakdown of the viral glycoprotein N by virus-triggered autophagy. (Microbial infection) The interaction with STX17 is decreased in presence of SARS coronavirus-2/SARS-CoV-2 ORF3A protein. Found in brain, heart, kidney, liver, lung, placenta, skeletal muscle, spleen and pancreas.

It localises to the cytoplasm. The protein resides in the golgi apparatus membrane. Its subcellular location is the cytoplasmic vesicle. It is found in the autophagosome membrane. The protein localises to the cell projection. It localises to the cilium membrane. Its function is as follows. SNAREs, soluble N-ethylmaleimide-sensitive factor-attachment protein receptors, are essential proteins for fusion of cellular membranes. SNAREs localized on opposing membranes assemble to form a trans-SNARE complex, an extended, parallel four alpha-helical bundle that drives membrane fusion. SNAP29 is a SNARE involved in autophagy through the direct control of autophagosome membrane fusion with the lysososome membrane. Also plays a role in ciliogenesis by regulating membrane fusions. The chain is Synaptosomal-associated protein 29 from Homo sapiens (Human).